Consider the following 351-residue polypeptide: Cell shape-determining protein MreB (351 aa).

Residues 20–22 (TAN), 169–171 (GGT), 217–220 (ERIK), and 299–302 (GGAL) each bind ATP.

It belongs to the FtsA/MreB family. Forms polymers.

The protein localises to the cytoplasm. Forms membrane-associated dynamic filaments that are essential for cell shape determination. Acts by regulating cell wall synthesis and cell elongation, and thus cell shape. A feedback loop between cell geometry and MreB localization may maintain elongated cell shape by targeting cell wall growth to regions of negative cell wall curvature. The polypeptide is Cell shape-determining protein MreB (Pasteurella multocida (strain Pm70)).